The sequence spans 180 residues: ATP synthase subunit delta (180 aa).

This sequence belongs to the ATPase delta chain family. F-type ATPases have 2 components, F(1) - the catalytic core - and F(0) - the membrane proton channel. F(1) has five subunits: alpha(3), beta(3), gamma(1), delta(1), epsilon(1). CF(0) has four main subunits: a(1), b(1), b'(1) and c(10-14). The alpha and beta chains form an alternating ring which encloses part of the gamma chain. F(1) is attached to F(0) by a central stalk formed by the gamma and epsilon chains, while a peripheral stalk is formed by the delta, b and b' chains.

The protein resides in the cellular thylakoid membrane. In terms of biological role, f(1)F(0) ATP synthase produces ATP from ADP in the presence of a proton or sodium gradient. F-type ATPases consist of two structural domains, F(1) containing the extramembraneous catalytic core and F(0) containing the membrane proton channel, linked together by a central stalk and a peripheral stalk. During catalysis, ATP synthesis in the catalytic domain of F(1) is coupled via a rotary mechanism of the central stalk subunits to proton translocation. Its function is as follows. This protein is part of the stalk that links CF(0) to CF(1). It either transmits conformational changes from CF(0) to CF(1) or is implicated in proton conduction. The chain is ATP synthase subunit delta from Prochlorococcus marinus subsp. pastoris (strain CCMP1986 / NIES-2087 / MED4).